The chain runs to 185 residues: Protein N-terminal glutamine amidohydrolase (185 aa).

Catalysis depends on residues cysteine 14, histidine 62, and aspartate 78.

The protein belongs to the NTAQ1 family. As to quaternary structure, monomer.

The catalysed reaction is N-terminal L-glutaminyl-[protein] + H2O = N-terminal L-glutamyl-[protein] + NH4(+). Functionally, mediates the side-chain deamidation of N-terminal glutamine residues to glutamate, an important step in N-end rule pathway of protein degradation. Conversion of the resulting N-terminal glutamine to glutamate renders the protein susceptible to arginylation, polyubiquitination and degradation as specified by the N-end rule. Does not act on substrates with internal or C-terminal glutamine and does not act on non-glutamine residues in any position. This Caenorhabditis briggsae protein is Protein N-terminal glutamine amidohydrolase.